The chain runs to 122 residues: Large ribosomal subunit protein uL14 (122 aa).

Belongs to the universal ribosomal protein uL14 family. In terms of assembly, part of the 50S ribosomal subunit. Forms a cluster with proteins L3 and L19. In the 70S ribosome, L14 and L19 interact and together make contacts with the 16S rRNA in bridges B5 and B8.

Binds to 23S rRNA. Forms part of two intersubunit bridges in the 70S ribosome. The protein is Large ribosomal subunit protein uL14 of Chlorobium chlorochromatii (strain CaD3).